A 262-amino-acid chain; its full sequence is tRNA pseudouridine synthase A (262 aa).

Residue D52 is the Nucleophile of the active site. Y103 contributes to the substrate binding site.

This sequence belongs to the tRNA pseudouridine synthase TruA family.

The enzyme catalyses uridine(38/39/40) in tRNA = pseudouridine(38/39/40) in tRNA. Functionally, formation of pseudouridine at positions 38, 39 and 40 in the anticodon stem and loop of transfer RNAs. The polypeptide is tRNA pseudouridine synthase A (Methanococcus maripaludis (strain C6 / ATCC BAA-1332)).